A 101-amino-acid chain; its full sequence is Small ribosomal subunit protein uS14 (101 aa).

Belongs to the universal ribosomal protein uS14 family. In terms of assembly, part of the 30S ribosomal subunit. Contacts proteins S3 and S10.

Its function is as follows. Binds 16S rRNA, required for the assembly of 30S particles and may also be responsible for determining the conformation of the 16S rRNA at the A site. In Pseudoalteromonas atlantica (strain T6c / ATCC BAA-1087), this protein is Small ribosomal subunit protein uS14.